A 249-amino-acid chain; its full sequence is Cytoplasmic envelopment protein 1 (249 aa).

Belongs to the herpesviridae cytoplasmic envelopment protein 1 family.

It localises to the virion. The protein localises to the virion tegument. Its subcellular location is the host cytoplasm. The protein resides in the host Golgi apparatus. Functionally, plays a critical role in cytoplasmic virus egress. Participates in the final step of tegumentation and envelope acquisition within the host cytoplasm. In Homo sapiens (Human), this protein is Cytoplasmic envelopment protein 1 (UL103).